The chain runs to 199 residues: uncharacterized protein (199 aa).

This is an uncharacterized protein from Rattus norvegicus (Rat).